Here is a 458-residue protein sequence, read N- to C-terminus: RuvB-like helicase 1 (458 aa).

71-78 (GGPGTGKT) contributes to the ATP binding site.

Belongs to the RuvB family. In terms of assembly, may form heterododecamers with hel-2/rvb2. Component of the SWR1 chromatin remodeling complex, the INO80 chromatin remodeling complex, and of the R2TP complex.

Its subcellular location is the nucleus. It carries out the reaction ATP + H2O = ADP + phosphate + H(+). DNA helicase which participates in several chromatin remodeling complexes, including the SWR1 and the INO80 complexes. The SWR1 complex mediates the ATP-dependent exchange of histone H2A for the H2A variant H2A.Z leading to transcriptional regulation of selected genes by chromatin remodeling. The INO80 complex remodels chromatin by shifting nucleosomes and is involved in DNA repair. Also involved in pre-rRNA processing. The sequence is that of RuvB-like helicase 1 (hel-1) from Neurospora crassa (strain ATCC 24698 / 74-OR23-1A / CBS 708.71 / DSM 1257 / FGSC 987).